A 393-amino-acid polypeptide reads, in one-letter code: MHRITILGATGSIGESTLDVVRRHADRYVVHALTAHRQVRKLADQCVEFRPARAVVGTAEAALELETLLRDAGVKTEVSHGEAALESVAADAQTDSVMAAIVGAAGLRPTLAAARAGKRVLLANKEALVMSGRIFMDAVREHGATLLPIDSEHNAIFQCLPADDPRYGRGVARVLLTASGGPFRTRDPATLHDISPDQACAHPNWVMGRKISVDSATMMNKGLEVIEAHWLFGAPAERIEVLIHPQSIVHSMVAYTDGSVLAQLGNPDMRTPIAYGLAYPERIDAGVTPLDLTVAGGLHFEKPDLVRFPCLGLAFDALRAGGVAPAALNAANEVAVEAFLGGTVRFTDIAGIVRQVLEATPQGPADTLEAVLSADALAREAAREGVAALAAKR.

NADPH contacts are provided by Thr10, Gly11, Ser12, Ile13, Arg37, Gln38, and Asn124. Lys125 is a 1-deoxy-D-xylulose 5-phosphate binding site. Glu126 contacts NADPH. Asp150 lines the Mn(2+) pocket. Positions 151, 152, 179, and 202 each coordinate 1-deoxy-D-xylulose 5-phosphate. Residue Glu152 participates in Mn(2+) binding. Residue Gly208 participates in NADPH binding. The 1-deoxy-D-xylulose 5-phosphate site is built by Ser215, Asn220, Lys221, and Glu224. Residue Glu224 participates in Mn(2+) binding.

It belongs to the DXR family. It depends on Mg(2+) as a cofactor. Mn(2+) is required as a cofactor.

The enzyme catalyses 2-C-methyl-D-erythritol 4-phosphate + NADP(+) = 1-deoxy-D-xylulose 5-phosphate + NADPH + H(+). It functions in the pathway isoprenoid biosynthesis; isopentenyl diphosphate biosynthesis via DXP pathway; isopentenyl diphosphate from 1-deoxy-D-xylulose 5-phosphate: step 1/6. Catalyzes the NADPH-dependent rearrangement and reduction of 1-deoxy-D-xylulose-5-phosphate (DXP) to 2-C-methyl-D-erythritol 4-phosphate (MEP). In Cupriavidus necator (strain ATCC 17699 / DSM 428 / KCTC 22496 / NCIMB 10442 / H16 / Stanier 337) (Ralstonia eutropha), this protein is 1-deoxy-D-xylulose 5-phosphate reductoisomerase.